A 487-amino-acid chain; its full sequence is L-tartrate/succinate antiporter (487 aa).

The next 14 membrane-spanning stretches (helical) occupy residues 10-30 (YLAPLAVIAIIALLPVPAGLE), 33-53 (TWLYFAVFTGVIVGLILEPVP), 54-74 (GAVVAMVGISIIAILSPWLLF), 93-113 (WAVSGFSNSVIWLIFAAFMFG), 137-157 (TLFLGYAVMFSELILAPVTPS), 189-209 (IGSYIMWMGIVADCVTSAIFL), 236-256 (FLGMLPLSILLVLLVPWLAYV), 292-312 (LMVGALVLWIFGGDYIDAAMV), 313-333 (GYSVVALMLLLRIISWDDIVS), 340-360 (VFFWLASLITLATGLNNTGFI), 370-390 (SLSGYSPTMVMVTLIVVFYLL), 393-413 (FFASATAYTCALAPMMIAAAL), 418-438 (IPLPVFCLMVGAAIGLGSILT), and 465-485 (IFGLIFLVLLVITGLLWMPVV).

This sequence belongs to the SLC13A/DASS transporter (TC 2.A.47) family. DIT1 subfamily.

It localises to the cell inner membrane. The enzyme catalyses (2R,3R)-tartrate(out) + succinate(in) = (2R,3R)-tartrate(in) + succinate(out). Functionally, catalyzes the uptake of tartrate in exchange for intracellular succinate. Essential for anaerobic L-tartrate fermentation. The sequence is that of L-tartrate/succinate antiporter (ttdT) from Shigella flexneri.